A 175-amino-acid polypeptide reads, in one-letter code: Thioredoxin-like protein CITRX, chloroplastic (175 aa).

The transit peptide at 1 to 73 directs the protein to the chloroplast; it reads MQAASLAFHP…REDYLVKKLS (73 aa). Positions 74-175 constitute a Thioredoxin domain; sequence AKEIQELIKG…MMRDIINNDL (102 aa). Residues Cys98 and Cys101 each act as nucleophile in the active site. A disulfide bridge connects residues Cys98 and Cys101.

Belongs to the thioredoxin family. Plant CITRX-type subfamily.

The protein localises to the plastid. It is found in the chloroplast. Probable thiol-disulfide oxidoreductase that may play a role in proper chloroplast development. The protein is Thioredoxin-like protein CITRX, chloroplastic of Solanum tuberosum (Potato).